The sequence spans 183 residues: Secreted RxLR effector protein 41 (183 aa).

An N-terminal signal peptide occupies residues 1 to 18 (MLGFVTGVLAISAHVIVS). The RxLR-dEER signature appears at 41 to 65 (RRLRSYETDTASARAEEGTSDIEER). An N-linked (GlcNAc...) asparagine glycan is attached at asparagine 88.

Belongs to the RxLR effector family.

Its subcellular location is the secreted. The protein resides in the host nucleus. It is found in the host cytoplasm. Secreted effector that dos not suppress the host cell death induced by cell death-inducing proteins. The polypeptide is Secreted RxLR effector protein 41 (Plasmopara viticola (Downy mildew of grapevine)).